Here is a 92-residue protein sequence, read N- to C-terminus: C-C motif chemokine 3 (92 aa).

The N-terminal stretch at 1–23 (MQVSTAALAVLLCTMALCNQFSA) is a signal peptide. 2 cysteine pairs are disulfide-bonded: cysteine 33-cysteine 57 and cysteine 34-cysteine 73.

Belongs to the intercrine beta (chemokine CC) family. As to quaternary structure, self-associates. Also heterodimer of MIP-1-alpha(4-69) and MIP-1-beta(3-69). Interacts with CCR1. N-terminal processed form LD78-alpha(4-69) is produced by proteolytic cleavage after secretion from HTLV1-transformed T-cells.

It localises to the secreted. Its function is as follows. Monokine with inflammatory and chemokinetic properties. Binds to CCR1, CCR4 and CCR5. One of the major HIV-suppressive factors produced by CD8+ T-cells. Recombinant MIP-1-alpha induces a dose-dependent inhibition of different strains of HIV-1, HIV-2, and simian immunodeficiency virus (SIV). The sequence is that of C-C motif chemokine 3 (CCL3) from Homo sapiens (Human).